Here is a 248-residue protein sequence, read N- to C-terminus: 4-hydroxy-tetrahydrodipicolinate reductase (248 aa).

NAD(+) contacts are provided by residues 9 to 14 (GAKGRV), 77 to 79 (GTT), and 104 to 107 (APNF). Residue His134 is the Proton donor/acceptor of the active site. His135 provides a ligand contact to (S)-2,3,4,5-tetrahydrodipicolinate. The Proton donor role is filled by Lys138. Position 144–145 (144–145 (GT)) interacts with (S)-2,3,4,5-tetrahydrodipicolinate.

Belongs to the DapB family.

Its subcellular location is the cytoplasm. The enzyme catalyses (S)-2,3,4,5-tetrahydrodipicolinate + NAD(+) + H2O = (2S,4S)-4-hydroxy-2,3,4,5-tetrahydrodipicolinate + NADH + H(+). The catalysed reaction is (S)-2,3,4,5-tetrahydrodipicolinate + NADP(+) + H2O = (2S,4S)-4-hydroxy-2,3,4,5-tetrahydrodipicolinate + NADPH + H(+). It participates in amino-acid biosynthesis; L-lysine biosynthesis via DAP pathway; (S)-tetrahydrodipicolinate from L-aspartate: step 4/4. Its function is as follows. Catalyzes the conversion of 4-hydroxy-tetrahydrodipicolinate (HTPA) to tetrahydrodipicolinate. In Corynebacterium glutamicum (strain ATCC 13032 / DSM 20300 / JCM 1318 / BCRC 11384 / CCUG 27702 / LMG 3730 / NBRC 12168 / NCIMB 10025 / NRRL B-2784 / 534), this protein is 4-hydroxy-tetrahydrodipicolinate reductase.